The following is a 140-amino-acid chain: MAIQRTFSIIKPDATARNLTGAINAKIEAAGLRIIAQKRIRLSREQAEGFYGVHKERPFFNDLVTFMISGPVVVQVLEGEDAIAKYRTVMGATNPEQADAGTIRKDFAESIEANSVHGSDAPETAAEEIPFFFSDDEIVG.

ATP-binding residues include lysine 11, phenylalanine 59, arginine 87, threonine 93, arginine 104, and asparagine 114. The Pros-phosphohistidine intermediate role is filled by histidine 117.

The protein belongs to the NDK family. In terms of assembly, homotetramer. The cofactor is Mg(2+).

The protein resides in the cytoplasm. It catalyses the reaction a 2'-deoxyribonucleoside 5'-diphosphate + ATP = a 2'-deoxyribonucleoside 5'-triphosphate + ADP. The catalysed reaction is a ribonucleoside 5'-diphosphate + ATP = a ribonucleoside 5'-triphosphate + ADP. In terms of biological role, major role in the synthesis of nucleoside triphosphates other than ATP. The ATP gamma phosphate is transferred to the NDP beta phosphate via a ping-pong mechanism, using a phosphorylated active-site intermediate. The polypeptide is Nucleoside diphosphate kinase (Maricaulis maris (strain MCS10) (Caulobacter maris)).